The following is a 217-amino-acid chain: Probable transaldolase (217 aa).

The active-site Schiff-base intermediate with substrate is the Lys83.

It belongs to the transaldolase family. Type 3B subfamily.

Its subcellular location is the cytoplasm. It catalyses the reaction D-sedoheptulose 7-phosphate + D-glyceraldehyde 3-phosphate = D-erythrose 4-phosphate + beta-D-fructose 6-phosphate. Its pathway is carbohydrate degradation; pentose phosphate pathway; D-glyceraldehyde 3-phosphate and beta-D-fructose 6-phosphate from D-ribose 5-phosphate and D-xylulose 5-phosphate (non-oxidative stage): step 2/3. Functionally, transaldolase is important for the balance of metabolites in the pentose-phosphate pathway. This is Probable transaldolase from Brucella melitensis biotype 1 (strain ATCC 23456 / CCUG 17765 / NCTC 10094 / 16M).